A 417-amino-acid polypeptide reads, in one-letter code: UDP-N-acetylglucosamine 1-carboxyvinyltransferase 2 (417 aa).

22–23 lines the phosphoenolpyruvate pocket; it reads KN. R94 contributes to the UDP-N-acetyl-alpha-D-glucosamine binding site. The active-site Proton donor is the C118. Residue C118 is modified to 2-(S-cysteinyl)pyruvic acid O-phosphothioketal. UDP-N-acetyl-alpha-D-glucosamine is bound by residues 123–127, D306, and I328; that span reads RPIDL.

Belongs to the EPSP synthase family. MurA subfamily.

Its subcellular location is the cytoplasm. It carries out the reaction phosphoenolpyruvate + UDP-N-acetyl-alpha-D-glucosamine = UDP-N-acetyl-3-O-(1-carboxyvinyl)-alpha-D-glucosamine + phosphate. The protein operates within cell wall biogenesis; peptidoglycan biosynthesis. Functionally, cell wall formation. Adds enolpyruvyl to UDP-N-acetylglucosamine. The chain is UDP-N-acetylglucosamine 1-carboxyvinyltransferase 2 from Clostridium tetani (strain Massachusetts / E88).